The primary structure comprises 277 residues: Diaminopimelate epimerase (277 aa).

Asn-11 and Asn-62 together coordinate substrate. Cys-71 functions as the Proton donor in the catalytic mechanism. Substrate-binding positions include 72–73 (GN), Asn-160, Asn-193, and 211–212 (ER). Cys-220 serves as the catalytic Proton acceptor. 221 to 222 (GT) lines the substrate pocket.

It belongs to the diaminopimelate epimerase family. Homodimer.

The protein resides in the cytoplasm. It carries out the reaction (2S,6S)-2,6-diaminopimelate = meso-2,6-diaminopimelate. It functions in the pathway amino-acid biosynthesis; L-lysine biosynthesis via DAP pathway; DL-2,6-diaminopimelate from LL-2,6-diaminopimelate: step 1/1. Its function is as follows. Catalyzes the stereoinversion of LL-2,6-diaminopimelate (L,L-DAP) to meso-diaminopimelate (meso-DAP), a precursor of L-lysine. The sequence is that of Diaminopimelate epimerase from Methanococcus maripaludis (strain DSM 14266 / JCM 13030 / NBRC 101832 / S2 / LL).